The following is a 1017-amino-acid chain: Dopamine dehydroxylase (1017 aa).

Residues 1–34 constitute a signal peptide (tat-type signal); the sequence is MGNLTMSRRTFVKTAAITGAAAAAFGASTHTALA. Positions 45-103 constitute a 4Fe-4S Mo/W bis-MGD-type domain; the sequence is DTVAVKTCCRGCGKMECGVKVIVQNGRAIRVEGDEGAFQSMGNCCTKSQSSIQAAYHPD. Residues Cys-53, Cys-56, Cys-61, and Cys-89 each coordinate [4Fe-4S] cluster. Lys-91 functions as the Electron donor/acceptor in the catalytic mechanism.

The protein belongs to the prokaryotic molybdopterin-containing oxidoreductase family. It depends on [4Fe-4S] cluster as a cofactor. Mo-bis(molybdopterin guanine dinucleotide) is required as a cofactor. Post-translationally, predicted to be exported by the Tat system. The position of the signal peptide cleavage has not been experimentally proven.

It catalyses the reaction dopamine + AH2 = 3-tyramine + A + H2O. Involved in drug metabolism, as part of an interspecies gut bacterial pathway for Levodopa (L-dopa) metabolism, acting on dopamine produced by Enterecoccus L-dopa decarboxylase. Removes the para hydroxyl group of dopamine to produce m-tyramine (3-tyramine). It is possible that dopamine dehydroxylation influences the multiple side effects of L-dopa administration linked to dopamine production in the treatment of Parkinson's disease. This is Dopamine dehydroxylase from Eggerthella lenta (Eubacterium lentum).